The chain runs to 289 residues: tRNA pseudouridine synthase B (289 aa).

Residue D38 is the Nucleophile of the active site.

This sequence belongs to the pseudouridine synthase TruB family. Type 1 subfamily.

It catalyses the reaction uridine(55) in tRNA = pseudouridine(55) in tRNA. In terms of biological role, responsible for synthesis of pseudouridine from uracil-55 in the psi GC loop of transfer RNAs. The chain is tRNA pseudouridine synthase B from Acaryochloris marina (strain MBIC 11017).